A 384-amino-acid polypeptide reads, in one-letter code: Anhydro-N-acetylmuramic acid kinase (384 aa).

An ATP-binding site is contributed by 9-16; sequence GTSADGVD.

This sequence belongs to the anhydro-N-acetylmuramic acid kinase family.

It catalyses the reaction 1,6-anhydro-N-acetyl-beta-muramate + ATP + H2O = N-acetyl-D-muramate 6-phosphate + ADP + H(+). It functions in the pathway amino-sugar metabolism; 1,6-anhydro-N-acetylmuramate degradation. The protein operates within cell wall biogenesis; peptidoglycan recycling. Catalyzes the specific phosphorylation of 1,6-anhydro-N-acetylmuramic acid (anhMurNAc) with the simultaneous cleavage of the 1,6-anhydro ring, generating MurNAc-6-P. Is required for the utilization of anhMurNAc either imported from the medium or derived from its own cell wall murein, and thus plays a role in cell wall recycling. The chain is Anhydro-N-acetylmuramic acid kinase from Synechococcus sp. (strain CC9311).